We begin with the raw amino-acid sequence, 279 residues long: Movement protein (279 aa).

Residues 255-279 are disordered; sequence SPPFAIGSPSASRNNSFRSQVVNGL. A compositionally biased stretch (polar residues) spans 263-279; that stretch reads PSASRNNSFRSQVVNGL.

This sequence belongs to the cucumovirus movement protein family.

Its subcellular location is the host cell junction. It is found in the host plasmodesma. Its function is as follows. Transports viral genome to neighboring plant cells directly through plasmosdesmata, without any budding. The movement protein allows efficient cell to cell propagation, by bypassing the host cell wall barrier. Acts by forming a tubular structure at the host plasmodesmata, enlarging it enough to allow free passage of virion capsids. This chain is Movement protein, found in Cucumis sativus (Cucumber).